The sequence spans 118 residues: MARVKRGTIARARHKKVLKQAKGYYGARSRVYRVAVQAVTKAGQYAYRDRRQRKRQFRQLWIARINAAARQNGMSYSRFINGLKKASVEIDRKILADIAVHDKAAFSALVEAAKGALA.

The protein belongs to the bacterial ribosomal protein bL20 family.

Functionally, binds directly to 23S ribosomal RNA and is necessary for the in vitro assembly process of the 50S ribosomal subunit. It is not involved in the protein synthesizing functions of that subunit. The chain is Large ribosomal subunit protein bL20 from Alteromonas mediterranea (strain DSM 17117 / CIP 110805 / LMG 28347 / Deep ecotype).